We begin with the raw amino-acid sequence, 372 residues long: Zinc finger protein dpff-1 (372 aa).

The tract at residues 108 to 204 is disordered; that stretch reads VGPTTESVSD…SRSIVKETKY (97 aa). Polar residues predominate over residues 109–131; that stretch reads GPTTESVSDSSNDSTTIRPSRQT. Residues 132–141 are compositionally biased toward basic and acidic residues; sequence QIKEEYRDDY. The segment covering 142–158 has biased composition (acidic residues); it reads VLDDELSPDEFGSDEDD. A compositionally biased stretch (polar residues) spans 184 to 196; that stretch reads TTRSSVSRLTPSR. The C2H2-type zinc-finger motif lies at 212–235; it reads YPCDKCSAKYKSLAGLSYHQSYLH. 2 PHD-type zinc fingers span residues 256 to 314 and 316 to 361; these read SCDF…CKSC and ICGT…CQVE.

Belongs to the requiem/DPF family.

The protein resides in the nucleus. It is found in the cytoplasm. Probable transcription factor, involved in meiosis and stress protection. The polypeptide is Zinc finger protein dpff-1 (Caenorhabditis elegans).